Consider the following 91-residue polypeptide: MAVKIRLTRLGSKRNPFYRIVVADARSPRDGRIIEQIGTYNPASVNAPEVKIDEELALKWLKDGAKPTDTVHNILSKQGILKTFDEQKHAK.

The protein belongs to the bacterial ribosomal protein bS16 family.

The sequence is that of Small ribosomal subunit protein bS16 from Staphylococcus haemolyticus (strain JCSC1435).